A 349-amino-acid chain; its full sequence is Flagellar P-ring protein (349 aa).

An N-terminal signal peptide occupies residues 1-20; sequence MSKAIKILLPLLLFSLSLQA.

The protein belongs to the FlgI family. In terms of assembly, the basal body constitutes a major portion of the flagellar organelle and consists of four rings (L,P,S, and M) mounted on a central rod.

The protein localises to the periplasm. It localises to the bacterial flagellum basal body. In terms of biological role, assembles around the rod to form the L-ring and probably protects the motor/basal body from shearing forces during rotation. The protein is Flagellar P-ring protein of Wolinella succinogenes (strain ATCC 29543 / DSM 1740 / CCUG 13145 / JCM 31913 / LMG 7466 / NCTC 11488 / FDC 602W) (Vibrio succinogenes).